We begin with the raw amino-acid sequence, 184 residues long: Translation initiation factor IF-3 (184 aa).

This sequence belongs to the IF-3 family. In terms of assembly, monomer.

It localises to the cytoplasm. IF-3 binds to the 30S ribosomal subunit and shifts the equilibrium between 70S ribosomes and their 50S and 30S subunits in favor of the free subunits, thus enhancing the availability of 30S subunits on which protein synthesis initiation begins. This is Translation initiation factor IF-3 from Hamiltonella defensa subsp. Acyrthosiphon pisum (strain 5AT).